We begin with the raw amino-acid sequence, 299 residues long: MNNIIDGKKLAEEIIVKVKAETIKLRNNYNIQPGIAVIIVGDDPASQVYVASKNKKAEECGFLSIKHVVSKETQEKELLQLIATLNSDPKIHGILVQLPLPAHINTNRITQAVAFQKDVDGFHYVNVGKLAANALEDAIIPCTPAGAMMMIEQHCGRDLSGLDAVVVGRSNIVGKPMAALLTAANATVTIAHSRTRDLDDVCRSADILVAAVGRPQMIKKDWIKKDAIVIDVGINRIPAPEKGVGKTHLIGDVDFENVKEKAAAITPVPGGVGPMTIAMLMVNTLKAAARLHNLPIPKF.

Residues 168–170 (GRS), Ser-193, and Ile-234 contribute to the NADP(+) site.

Belongs to the tetrahydrofolate dehydrogenase/cyclohydrolase family. Homodimer.

The enzyme catalyses (6R)-5,10-methylene-5,6,7,8-tetrahydrofolate + NADP(+) = (6R)-5,10-methenyltetrahydrofolate + NADPH. It carries out the reaction (6R)-5,10-methenyltetrahydrofolate + H2O = (6R)-10-formyltetrahydrofolate + H(+). Its pathway is one-carbon metabolism; tetrahydrofolate interconversion. Its function is as follows. Catalyzes the oxidation of 5,10-methylenetetrahydrofolate to 5,10-methenyltetrahydrofolate and then the hydrolysis of 5,10-methenyltetrahydrofolate to 10-formyltetrahydrofolate. The protein is Bifunctional protein FolD of Bartonella tribocorum (strain CIP 105476 / IBS 506).